Reading from the N-terminus, the 272-residue chain is MNNSEQLIALKESETAFLKYFNKADYELVDFSVVEKLDWKQLNHEDLQQMGERNFWQHEHQIYALRNDFTDQLLRYYSMYPTAATKVAYTGLIIRNNEAAVQVGLENYAPSLANVQQSLKLFIQFIQQQLRDNVHFVVLGHYQLLDALLDKSLQTPDILSMIEERNLSGLVTYLSTEHPIVQILKENTQQQLNVLEHYIPNDHPALVELKIWERWLHTQGYKDIHLDITAQPPRSYYTGLFIQCHFAENESRVLTGGYYKGSIEGFGLGLTL.

It belongs to the class-II aminoacyl-tRNA synthetase family. HisZ subfamily. Heteromultimer composed of HisG and HisZ subunits.

Its subcellular location is the cytoplasm. Its pathway is amino-acid biosynthesis; L-histidine biosynthesis; L-histidine from 5-phospho-alpha-D-ribose 1-diphosphate: step 1/9. Its function is as follows. Required for the first step of histidine biosynthesis. May allow the feedback regulation of ATP phosphoribosyltransferase activity by histidine. This chain is ATP phosphoribosyltransferase regulatory subunit, found in Staphylococcus aureus (strain Mu3 / ATCC 700698).